The following is a 1523-amino-acid chain: MLPTSSNNEENRKPENSFPPTHFDTWERLSDYQKPSSSTTDDAYGKPVAKISPTASIDERETGIIGSTLRQDSTDSDSTGSSNMNPYDRLDKEVISKKNAHTNSYRNDVDELEGSLRTLGLQKVNAPTISSFSAWKSQSSALPAPSSSETSKIVKAEIKAPQQPMSLNPNYFDVMREMEKSMNIFTKLFRGSQIRNKNDLPSGRHLVNYRQNHAFDFAAMSHIWKENKMENLPKLPHRANLVMTLPSSRVRNSKICAFYRVLEKKEDKYILVACHVNIHGFHRGDLRFVEVNNRTVLKGFERSSVIGHLFLGDILTVTELTRCNETVSNVASSVEDASPDAPCQWMASKVVLFPRHEPVNVQFKFTCNGMASVVSTNEPMSVILNNLTEAKTNVEYTGIAFKSASYTVHTEDYTKKWYERIQEEISNIMIYPKALSTIYQYEEYTPNFVVEKQEQEEHPYQQDLEDLDLYRQHEMQTNVFTKFFDIGKSEKRKFGPGKSISNCRHSDAIDFAAMSYIWKNIRQQHLPKLPKLPNMVLPLPTSMPLDSEICAFYRVLVENKSKYILIACHMNVHGYHRGDLRFLEINESTKLYGFEGRSVIGQLFLGDIVAVTELARCNGHGSDAFKIPFDVSMSSQNTCTWMASKITLPSRPPPASVLFSFMKNRMAVVKGCDEPMNVEVKSIQNVEPDLIYKGTAFKPEKPELNFTEGFIKKKRHQIGSITLRIASYPNSFGTIYNFQESDIDNEHYKIGINAFSEEKFTEISLDEREKIVETCSLMGFSAANTIFNGRFDCRAFKMEEIKKNGMTVMFCIENPTSQPTLGLWCAGNRIVIGGPNGDVNGAIETVIDDPDIGYLRIAARLSRDIPKKFSFKGDGEFFVSQREVFENEILDDGYFKTLDPGCNGRRIIETLYGGKPLERVVVDKRDSSIERMMSQLFGVGSGISEHKTSGKKSEDTPTQFYFPSTPEPLALNKYQCEYVQMLLDGNPLIIGSSPFGCGKSMTIITAALELYKLKKNRKQLLITQSNYASVNLIDIAQRVCLSGDDDLKDLKFVRFVSEKNWNELPSNCRTDSDMPYLMNKLFKDWAMGRIDLTNLTCLKTHHYVQMVSHIIKNDLVNPMLFGDHIAQIYDKLSADFSRAPHAQTLVEAFFMIYKPDLVMVTADSAKGLLNILRDVCAVQIDEASQLAECTLLGLLKSFNNASFGLIGDIHQLPPYCEEGLEGKLKDFGIGNTMERAIKEKMFPVCTLRNVYRCHPKTTELLSELFYDGALVSGVSELARSDFMTKRDDFWPNPKFPMMFVNNTGASTKMGTSTSNSSEKSIVGEIVQNLINDPRNPVNPSDIGVISFYSAQTSILTEHLRGSGVKCGTVDAFQGSEKEIIIMCSTNERISDFMQLSNRLNVAMSRAKQVTIIIGHLDGLRRANYWSTIVNKIEQNGNLVNANDWYQNQRRNKVSLSSYPLISTSRQSKQQRANEYNSQHKHVKRQSNNDYGSQRSVTNSLNPEFVGKWDDETYGDWPTIQKST.

The segment at M1–R89 is disordered. S993–S1000 provides a ligand contact to ATP. Composition is skewed to polar residues over residues T1463 to N1476 and Q1485 to N1498. Residues T1463 to N1498 are disordered.

It belongs to the DNA2/NAM7 helicase family.

This is an uncharacterized protein from Caenorhabditis elegans.